A 319-amino-acid chain; its full sequence is Methionyl-tRNA formyltransferase (319 aa).

(6S)-5,6,7,8-tetrahydrofolate is bound at residue 115 to 118 (SLLP).

Belongs to the Fmt family.

It catalyses the reaction L-methionyl-tRNA(fMet) + (6R)-10-formyltetrahydrofolate = N-formyl-L-methionyl-tRNA(fMet) + (6S)-5,6,7,8-tetrahydrofolate + H(+). Functionally, attaches a formyl group to the free amino group of methionyl-tRNA(fMet). The formyl group appears to play a dual role in the initiator identity of N-formylmethionyl-tRNA by promoting its recognition by IF2 and preventing the misappropriation of this tRNA by the elongation apparatus. The chain is Methionyl-tRNA formyltransferase from Lactococcus lactis subsp. lactis (strain IL1403) (Streptococcus lactis).